The primary structure comprises 362 residues: N5-carboxyaminoimidazole ribonucleotide synthase (362 aa).

Residues R108, K148, 153-159, 185-188, E193, H216, and 270-271 contribute to the ATP site; these read GYDGKGQ, EGFV, and NE. The ATP-grasp domain maps to 112 to 300; it reads KQFLNESGIE…QFEQHIRAVA (189 aa).

This sequence belongs to the PurK/PurT family. As to quaternary structure, homodimer.

The enzyme catalyses 5-amino-1-(5-phospho-beta-D-ribosyl)imidazole + hydrogencarbonate + ATP = 5-carboxyamino-1-(5-phospho-D-ribosyl)imidazole + ADP + phosphate + 2 H(+). Its pathway is purine metabolism; IMP biosynthesis via de novo pathway; 5-amino-1-(5-phospho-D-ribosyl)imidazole-4-carboxylate from 5-amino-1-(5-phospho-D-ribosyl)imidazole (N5-CAIR route): step 1/2. In terms of biological role, catalyzes the ATP-dependent conversion of 5-aminoimidazole ribonucleotide (AIR) and HCO(3)(-) to N5-carboxyaminoimidazole ribonucleotide (N5-CAIR). The protein is N5-carboxyaminoimidazole ribonucleotide synthase of Brucella melitensis biotype 1 (strain ATCC 23456 / CCUG 17765 / NCTC 10094 / 16M).